A 110-amino-acid polypeptide reads, in one-letter code: UPF0122 protein SE_0911 (110 aa).

This sequence belongs to the UPF0122 family.

Functionally, might take part in the signal recognition particle (SRP) pathway. This is inferred from the conservation of its genetic proximity to ftsY/ffh. May be a regulatory protein. The chain is UPF0122 protein SE_0911 from Staphylococcus epidermidis (strain ATCC 12228 / FDA PCI 1200).